The sequence spans 131 residues: UPF0102 protein YraN (131 aa).

Polar residues predominate over residues 1–19; the sequence is MATVPTRSGSPRQLTTKQT. A disordered region spans residues 1–21; the sequence is MATVPTRSGSPRQLTTKQTGD.

This sequence belongs to the UPF0102 family.

The polypeptide is UPF0102 protein YraN (Escherichia coli O7:K1 (strain IAI39 / ExPEC)).